The sequence spans 295 residues: MSVKHFIQITKPGIIFGNVLSVAGGFFLASKGHVDFALFLAVVIGTSLVVASGCVFNNCIDRDIDHKMERTKNRVMVQGGMSLPLALIYATLLGVAGFSLLYVQANPLSAFCALIGFVVYVGFYSLWLKRKSVHGTLVGSLSGAMPPVIGYCAVSNSFDLAAVTLLVMFSLWQMPHSFAIAIFRFKDYSAANIPVLPVARGILAAKKQIVLYVLAFVLATLMLTLGGYAGLGYLAVAAAMGLYWLYMAWGGYKAEDDSKWARKVFGFSILTVTALSVMMGVDSQTAADVLMTYAR.

Helical transmembrane passes span 9 to 29 (ITKPGIIFGNVLSVAGGFFLA), 36 to 56 (FALFLAVVIGTSLVVASGCVF), 83 to 103 (LPLALIYATLLGVAGFSLLYV), 108 to 128 (LSAFCALIGFVVYVGFYSLWL), 135 to 155 (GTLVGSLSGAMPPVIGYCAVS), 163 to 183 (VTLLVMFSLWQMPHSFAIAIF), 209 to 229 (IVLYVLAFVLATLMLTLGGYA), 230 to 250 (GLGYLAVAAAMGLYWLYMAWG), and 264 to 284 (VFGFSILTVTALSVMMGVDSQ).

Belongs to the UbiA prenyltransferase family. Protoheme IX farnesyltransferase subfamily.

Its subcellular location is the cell inner membrane. The catalysed reaction is heme b + (2E,6E)-farnesyl diphosphate + H2O = Fe(II)-heme o + diphosphate. It functions in the pathway porphyrin-containing compound metabolism; heme O biosynthesis; heme O from protoheme: step 1/1. Its function is as follows. Converts heme B (protoheme IX) to heme O by substitution of the vinyl group on carbon 2 of heme B porphyrin ring with a hydroxyethyl farnesyl side group. This is Protoheme IX farnesyltransferase 2 from Pseudomonas putida (strain ATCC 47054 / DSM 6125 / CFBP 8728 / NCIMB 11950 / KT2440).